We begin with the raw amino-acid sequence, 992 residues long: Translation initiation factor IF-2 (992 aa).

2 disordered regions span residues 154-173 (RRLR…EREA) and 338-399 (AAPG…RPES). Residues 492–661 (PRAPVVTVMG…LLQAEVLELK (170 aa)) form the tr-type G domain. Residues 501–508 (GHVDHGKT) form a G1 region. 501–508 (GHVDHGKT) contacts GTP. A G2 region spans residues 526 to 530 (GITQH). Positions 547–550 (DTPG) are G3. GTP-binding positions include 547–551 (DTPGH) and 601–604 (NKID). Residues 601-604 (NKID) are G4. The tract at residues 637 to 639 (SAH) is G5.

Belongs to the TRAFAC class translation factor GTPase superfamily. Classic translation factor GTPase family. IF-2 subfamily.

The protein localises to the cytoplasm. Functionally, one of the essential components for the initiation of protein synthesis. Protects formylmethionyl-tRNA from spontaneous hydrolysis and promotes its binding to the 30S ribosomal subunits. Also involved in the hydrolysis of GTP during the formation of the 70S ribosomal complex. This Polaromonas naphthalenivorans (strain CJ2) protein is Translation initiation factor IF-2.